Here is a 391-residue protein sequence, read N- to C-terminus: Putative gustatory receptor 36b (391 aa).

Residues 1 to 4 are Cytoplasmic-facing; that stretch reads MVDW. A helical membrane pass occupies residues 5 to 25; sequence VVLLLKAVHIYCYLIGLSNFE. Residues 26-39 lie on the Extracellular side of the membrane; the sequence is FDCRTGRVFKSRRC. Residues 40–60 form a helical membrane-spanning segment; the sequence is TIYAFMANIFILITIIYNFTA. Residues 61–74 lie on the Cytoplasmic side of the membrane; that stretch reads HGDTNLLFQSANKL. The helical transmembrane segment at 75-95 threads the bilayer; it reads HEYVIIIMSGLKIVAGLITVL. The Extracellular segment spans residues 96–127; it reads NRWLQRGQMMQLVKDVIRLYMINPQLKSMIRW. The chain crosses the membrane as a helical span at residues 128 to 148; it reads GILLKAFISFAIELLQVTLSV. The Cytoplasmic portion of the chain corresponds to 149–165; that stretch reads DALDRQGTAEMMGLLVK. A helical membrane pass occupies residues 166 to 186; it reads LCVSFIMNLAISQHFLVILLI. Over 187–284 the chain is Extracellular; it reads RAQYRIMNAK…YKYGPHNLKL (98 aa). Residues 285-305 form a helical membrane-spanning segment; it reads SAKTSIIVCILITLFYLDALV. Over 306–363 the chain is Cytoplasmic; the sequence is NCNNMLRVLDHHKDFLGLLEERTVFASSLDIRLEESFESLQLQLARNPLKINVMGMFP. The helical transmembrane segment at 364–384 threads the bilayer; that stretch reads ITRGSTAAMCASVIVNSIFLI. The Extracellular segment spans residues 385 to 391; it reads QFDMEFF.

Belongs to the insect chemoreceptor superfamily. Gustatory receptor (GR) family. Gr22e subfamily. As to expression, expressed in neurons of the terminal external chemosensory organ of larvae.

It localises to the cell membrane. In terms of biological role, probable gustatory receptor which mediates acceptance or avoidance behavior, depending on its substrates. This chain is Putative gustatory receptor 36b (Gr36b), found in Drosophila melanogaster (Fruit fly).